A 92-amino-acid chain; its full sequence is Small ribosomal subunit protein bS18 (92 aa).

It belongs to the bacterial ribosomal protein bS18 family. Part of the 30S ribosomal subunit. Forms a tight heterodimer with protein bS6.

Functionally, binds as a heterodimer with protein bS6 to the central domain of the 16S rRNA, where it helps stabilize the platform of the 30S subunit. In Ralstonia nicotianae (strain ATCC BAA-1114 / GMI1000) (Ralstonia solanacearum), this protein is Small ribosomal subunit protein bS18.